The following is a 495-amino-acid chain: 1-aminocyclopropane-1-carboxylate synthase 6 (495 aa).

Residues Glu58 and Tyr96 each coordinate substrate. The residue at position 280 (Lys280) is an N6-(pyridoxal phosphate)lysine. Ser480, Ser483, and Ser488 each carry phosphoserine.

The protein belongs to the class-I pyridoxal-phosphate-dependent aminotransferase family. As to quaternary structure, homodimer and heterodimer. In vivo, the relevance of heterodimerization with other ACS enzymes is however unsure. Interacts with GRF3. The cofactor is pyridoxal 5'-phosphate. Phosphorylated on serine residue by MAP kinase (MPK6). In terms of processing, may be processed at its C-terminus. As to expression, expressed in roots and flowers.

The catalysed reaction is S-adenosyl-L-methionine = 1-aminocyclopropane-1-carboxylate + S-methyl-5'-thioadenosine + H(+). It functions in the pathway alkene biosynthesis; ethylene biosynthesis via S-adenosyl-L-methionine; ethylene from S-adenosyl-L-methionine: step 1/2. 1-aminocyclopropane-1-carboxylate synthase (ACS) enzymes catalyze the conversion of S-adenosyl-L-methionine (SAM) into 1-aminocyclopropane-1-carboxylate (ACC), a direct precursor of ethylene. Involved in bacterial flagellin-induced ethylene production. This Arabidopsis thaliana (Mouse-ear cress) protein is 1-aminocyclopropane-1-carboxylate synthase 6 (ACS6).